The sequence spans 506 residues: ATP synthase subunit alpha (506 aa).

171–178 (GDRQTGKT) is an ATP binding site.

Belongs to the ATPase alpha/beta chains family. As to quaternary structure, F-type ATPases have 2 components, CF(1) - the catalytic core - and CF(0) - the membrane proton channel. CF(1) has five subunits: alpha(3), beta(3), gamma(1), delta(1), epsilon(1). CF(0) has four main subunits: a(1), b(1), b'(1) and c(9-12).

The protein localises to the cellular thylakoid membrane. It carries out the reaction ATP + H2O + 4 H(+)(in) = ADP + phosphate + 5 H(+)(out). In terms of biological role, produces ATP from ADP in the presence of a proton gradient across the membrane. The alpha chain is a regulatory subunit. The chain is ATP synthase subunit alpha from Trichormus variabilis (strain ATCC 29413 / PCC 7937) (Anabaena variabilis).